The primary structure comprises 208 residues: Small ribosomal subunit protein uS9c (208 aa).

Residues 1 to 52 (MASITNLASSLSSLSFSSQVSQRPNTISFPRANSVFALPAKSARRASLSITA) constitute a chloroplast transit peptide.

This sequence belongs to the universal ribosomal protein uS9 family.

The protein resides in the plastid. It localises to the chloroplast. Functionally, binds directly to 16S ribosomal RNA. The sequence is that of Small ribosomal subunit protein uS9c (RPS9) from Arabidopsis thaliana (Mouse-ear cress).